The following is a 373-amino-acid chain: Plasmepsin VIII (373 aa).

A signal peptide spans Met-1–Ser-21. One can recognise a Peptidase A1 domain in the interval Phe-50–Ala-370. Active-site residues include Asp-68 and Asp-258.

Belongs to the peptidase A1 family.

In terms of biological role, during the development in the mosquito vector, plays an essential role in sporozoite egress from the oocyst and sporozoite gliding motility, which is required for the invasion of salivary glands and subsequent transmission to the host. This chain is Plasmepsin VIII, found in Plasmodium berghei (strain Anka).